Here is a 103-residue protein sequence, read N- to C-terminus: ATP synthase F(0) complex subunit g, mitochondrial (103 aa).

Residue alanine 2 is modified to N-acetylalanine. N6-acetyllysine is present on residues lysine 11, lysine 24, lysine 35, and lysine 54.

The protein belongs to the ATPase g subunit family. Component of the ATP synthase complex composed at least of ATP5F1A/subunit alpha, ATP5F1B/subunit beta, ATP5MC1/subunit c (homooctomer), MT-ATP6/subunit a, MT-ATP8/subunit 8, ATP5ME/subunit e, ATP5MF/subunit f, ATP5MG/subunit g, ATP5MK/subunit k, ATP5MJ/subunit j, ATP5F1C/subunit gamma, ATP5F1D/subunit delta, ATP5F1E/subunit epsilon, ATP5PF/subunit F6, ATP5PB/subunit b, ATP5PD/subunit d, ATP5PO/subunit OSCP. ATP synthase complex consists of a soluble F(1) head domain (subunits alpha(3) and beta(3)) - the catalytic core - and a membrane F(0) domain - the membrane proton channel (subunits c, a, 8, e, f, g, k and j). These two domains are linked by a central stalk (subunits gamma, delta, and epsilon) rotating inside the F1 region and a stationary peripheral stalk (subunits F6, b, d, and OSCP).

Its subcellular location is the mitochondrion. The protein resides in the mitochondrion inner membrane. Subunit g, of the mitochondrial membrane ATP synthase complex (F(1)F(0) ATP synthase or Complex V) that produces ATP from ADP in the presence of a proton gradient across the membrane which is generated by electron transport complexes of the respiratory chain. ATP synthase complex consist of a soluble F(1) head domain - the catalytic core - and a membrane F(1) domain - the membrane proton channel. These two domains are linked by a central stalk rotating inside the F(1) region and a stationary peripheral stalk. During catalysis, ATP synthesis in the catalytic domain of F(1) is coupled via a rotary mechanism of the central stalk subunits to proton translocation. In vivo, can only synthesize ATP although its ATP hydrolase activity can be activated artificially in vitro. Part of the complex F(0) domain. This is ATP synthase F(0) complex subunit g, mitochondrial from Homo sapiens (Human).